We begin with the raw amino-acid sequence, 33 residues long: Beta/kappa-theraphotoxin-Hlv1a (33 aa).

Cystine bridges form between cysteine 2-cysteine 17, cysteine 9-cysteine 22, and cysteine 16-cysteine 29. Isoleucine 33 bears the Isoleucine amide mark.

The protein belongs to the neurotoxin 10 (Hwtx-1) family. 11 (haplotoxin-2) subfamily. As to expression, expressed by the venom gland.

The protein localises to the secreted. Its function is as follows. Spider venom neurotoxin that blocks voltage-gated sodium channel Nav1.3/SCN3A in human (IC(50)=80 nM) and rat (IC(50)=160 nM). Partially inhibits human Kv11.1/KCNH2/ERG (25% at 175 uM). This Cyriopagopus lividus (Cobalt blue tarantula) protein is Beta/kappa-theraphotoxin-Hlv1a.